The sequence spans 638 residues: 1-deoxy-D-xylulose-5-phosphate synthase (638 aa).

Thiamine diphosphate contacts are provided by residues H79 and 120-122; that span reads GHS. D151 is a Mg(2+) binding site. Thiamine diphosphate contacts are provided by residues 152-153, N182, Y291, and E373; that span reads GA. N182 provides a ligand contact to Mg(2+).

It belongs to the transketolase family. DXPS subfamily. In terms of assembly, homodimer. It depends on Mg(2+) as a cofactor. Thiamine diphosphate is required as a cofactor.

The catalysed reaction is D-glyceraldehyde 3-phosphate + pyruvate + H(+) = 1-deoxy-D-xylulose 5-phosphate + CO2. It functions in the pathway metabolic intermediate biosynthesis; 1-deoxy-D-xylulose 5-phosphate biosynthesis; 1-deoxy-D-xylulose 5-phosphate from D-glyceraldehyde 3-phosphate and pyruvate: step 1/1. Catalyzes the acyloin condensation reaction between C atoms 2 and 3 of pyruvate and glyceraldehyde 3-phosphate to yield 1-deoxy-D-xylulose-5-phosphate (DXP). The chain is 1-deoxy-D-xylulose-5-phosphate synthase from Xanthomonas oryzae pv. oryzae (strain MAFF 311018).